A 294-amino-acid chain; its full sequence is Indole-3-glycerol phosphate synthase (294 aa).

This sequence belongs to the TrpC family.

The enzyme catalyses 1-(2-carboxyphenylamino)-1-deoxy-D-ribulose 5-phosphate + H(+) = (1S,2R)-1-C-(indol-3-yl)glycerol 3-phosphate + CO2 + H2O. Its pathway is amino-acid biosynthesis; L-tryptophan biosynthesis; L-tryptophan from chorismate: step 4/5. The protein is Indole-3-glycerol phosphate synthase of Crocosphaera subtropica (strain ATCC 51142 / BH68) (Cyanothece sp. (strain ATCC 51142)).